A 421-amino-acid chain; its full sequence is UPF0415 protein C7orf25 (421 aa).

The protein belongs to the UPF0415 family.

This Homo sapiens (Human) protein is UPF0415 protein C7orf25 (C7orf25).